Here is a 223-residue protein sequence, read N- to C-terminus: Ribose-5-phosphate isomerase A (223 aa).

Residues 32 to 35, 85 to 88, and 98 to 101 each bind substrate; these read TGST, DGAD, and KGGG. The active-site Proton acceptor is Glu-107. Substrate is bound at residue Lys-125.

The protein belongs to the ribose 5-phosphate isomerase family. Homodimer.

The enzyme catalyses aldehydo-D-ribose 5-phosphate = D-ribulose 5-phosphate. It functions in the pathway carbohydrate degradation; pentose phosphate pathway; D-ribose 5-phosphate from D-ribulose 5-phosphate (non-oxidative stage): step 1/1. Functionally, catalyzes the reversible conversion of ribose-5-phosphate to ribulose 5-phosphate. This chain is Ribose-5-phosphate isomerase A, found in Pseudomonas paraeruginosa (strain DSM 24068 / PA7) (Pseudomonas aeruginosa (strain PA7)).